Here is a 119-residue protein sequence, read N- to C-terminus: Autophagy-related protein 8 (119 aa).

Residue G116 is the site of Phosphatidylethanolamine amidated glycine attachment. The propeptide at 117–119 is removed in mature form; that stretch reads EAL.

The protein belongs to the ATG8 family. In terms of assembly, conjugation to phosphatidylethanolamine (PE) leads to homodimerization. Interacts with ATG1, ATG3, ATG4, ATG7 and ATG12. The C-terminal Glu-117, Ala-118 and Leu-119 residues of ATG8 are removed by ATG4 to expose Gly-116 at the C-terminus. This Gly-116 forms then a thioester bond with ATG7 (E1-like activating enzyme) before being transferred to ATG3 (the specific E2 conjugating enzyme), in order to be finally amidated with phosphatidylethanolamine. This lipid modification anchors ATG8 to membranes and can be reversed by ATG4, releasing soluble ATG8.

Its subcellular location is the cytoplasmic vesicle. It is found in the cvt vesicle membrane. It localises to the autophagosome membrane. The protein resides in the vacuole membrane. In terms of biological role, ubiquitin-like modifier involved in cytoplasm to vacuole transport (Cvt) vesicles and autophagosome formation. With ATG4, mediates the delivery of the vesicles and autophagosomes to the vacuole via the microtubule cytoskeleton. Required for selective autophagic degradation of the nucleus (nucleophagy) as well as for mitophagy which contributes to regulate mitochondrial quantity and quality by eliminating the mitochondria to a basal level to fulfill cellular energy requirements and preventing excess ROS production. Also participates in membrane fusion events that take place in the early secretory pathway. Also involved in endoplasmic reticulum-specific autophagic process and is essential for the survival of cells subjected to severe ER stress. The ATG8-PE conjugate mediates tethering between adjacent membranes and stimulates membrane hemifusion, leading to expansion of the autophagosomal membrane during autophagy. Moreover not only conjugation, but also subsequent ATG8-PE deconjugation is an important step required to facilitate multiple events during macroautophagy, and especially for efficient autophagosome biogenesis, the assembly of ATG9-containing tubulovesicular clusters into phagophores/autophagosomes, and for the disassembly of PAS-associated ATG components. Autophagy is required for conidiation, aerial mycelial growth, and pseudothecia formation, but not for host invasion. This is Autophagy-related protein 8 from Cochliobolus heterostrophus (strain C4 / ATCC 48331 / race T) (Southern corn leaf blight fungus).